A 267-amino-acid polypeptide reads, in one-letter code: 4-hydroxy-tetrahydrodipicolinate reductase (267 aa).

Residue 11–16 (GAAGRM) participates in NAD(+) binding. Position 39 (Arg-39) interacts with NADP(+). NAD(+)-binding positions include 100 to 102 (GTT) and 126 to 129 (APNF). Catalysis depends on His-156, which acts as the Proton donor/acceptor. His-157 contributes to the (S)-2,3,4,5-tetrahydrodipicolinate binding site. Lys-160 serves as the catalytic Proton donor. 166-167 (GT) is a (S)-2,3,4,5-tetrahydrodipicolinate binding site.

This sequence belongs to the DapB family.

It is found in the cytoplasm. The enzyme catalyses (S)-2,3,4,5-tetrahydrodipicolinate + NAD(+) + H2O = (2S,4S)-4-hydroxy-2,3,4,5-tetrahydrodipicolinate + NADH + H(+). It catalyses the reaction (S)-2,3,4,5-tetrahydrodipicolinate + NADP(+) + H2O = (2S,4S)-4-hydroxy-2,3,4,5-tetrahydrodipicolinate + NADPH + H(+). The protein operates within amino-acid biosynthesis; L-lysine biosynthesis via DAP pathway; (S)-tetrahydrodipicolinate from L-aspartate: step 4/4. Functionally, catalyzes the conversion of 4-hydroxy-tetrahydrodipicolinate (HTPA) to tetrahydrodipicolinate. This chain is 4-hydroxy-tetrahydrodipicolinate reductase, found in Moorella thermoacetica (strain ATCC 39073 / JCM 9320).